A 425-amino-acid chain; its full sequence is L-cysteine:1D-myo-inositol 2-amino-2-deoxy-alpha-D-glucopyranoside ligase (425 aa).

Cys43 provides a ligand contact to Zn(2+). L-cysteinyl-5'-AMP contacts are provided by residues 43-46 (CGIT), Thr58, and 81-83 (NVT). Positions 45–55 (ITPYDATHIGH) match the 'HIGH' region motif. The 'ERGGDP' region motif lies at 195–200 (ERGGDP). Residue Trp236 coordinates L-cysteinyl-5'-AMP. Cys240 lines the Zn(2+) pocket. An L-cysteinyl-5'-AMP-binding site is contributed by 258–260 (GSD). His265 is a binding site for Zn(2+). Val295 serves as a coordination point for L-cysteinyl-5'-AMP. Residues 301-305 (KMSKS) carry the 'KMSKS' region motif.

This sequence belongs to the class-I aminoacyl-tRNA synthetase family. MshC subfamily. As to quaternary structure, monomer. Requires Zn(2+) as cofactor.

The enzyme catalyses 1D-myo-inositol 2-amino-2-deoxy-alpha-D-glucopyranoside + L-cysteine + ATP = 1D-myo-inositol 2-(L-cysteinylamino)-2-deoxy-alpha-D-glucopyranoside + AMP + diphosphate + H(+). Functionally, catalyzes the ATP-dependent condensation of GlcN-Ins and L-cysteine to form L-Cys-GlcN-Ins. This Sanguibacter keddieii (strain ATCC 51767 / DSM 10542 / NCFB 3025 / ST-74) protein is L-cysteine:1D-myo-inositol 2-amino-2-deoxy-alpha-D-glucopyranoside ligase.